The following is a 260-amino-acid chain: Ribosomal RNA small subunit methyltransferase J (260 aa).

S-adenosyl-L-methionine is bound by residues 125-126 (ER) and aspartate 179.

This sequence belongs to the methyltransferase superfamily. RsmJ family.

The protein localises to the cytoplasm. The enzyme catalyses guanosine(1516) in 16S rRNA + S-adenosyl-L-methionine = N(2)-methylguanosine(1516) in 16S rRNA + S-adenosyl-L-homocysteine + H(+). Specifically methylates the guanosine in position 1516 of 16S rRNA. The protein is Ribosomal RNA small subunit methyltransferase J of Pseudomonas fluorescens (strain ATCC BAA-477 / NRRL B-23932 / Pf-5).